The following is a 364-amino-acid chain: 3'(2'),5'-bisphosphate nucleotidase 1 (364 aa).

Catalysis depends on Asp-54, which acts as the Proton acceptor. Mg(2+)-binding residues include Glu-77, Asp-141, Ile-143, and Asp-144. The Proton acceptor role is filled by Thr-146. Thr-146, His-243, Ser-272, Lys-275, Arg-289, and Asp-302 together coordinate adenosine 3',5'-bisphosphate. Positions 243, 272, 275, 289, and 302 each coordinate AMP. Asp-302 is a Mg(2+) binding site.

The protein belongs to the inositol monophosphatase superfamily. It depends on Mg(2+) as a cofactor.

It catalyses the reaction 3'-phosphoadenylyl sulfate + H2O = adenosine 5'-phosphosulfate + phosphate. It carries out the reaction adenosine 3',5'-bisphosphate + H2O = AMP + phosphate. The enzyme catalyses adenosine 2',5'-bisphosphate + H2O = AMP + phosphate. Its function is as follows. Phosphatase that converts adenosine 3'-phosphate 5'-phosphosulfate (PAPS) to adenosine 5'-phosphosulfate (APS) and 3'(2')-phosphoadenosine 5'-phosphate (PAP) to AMP. Regulates the flux of sulfur in the sulfur-activation pathway by converting PAPS to APS. Involved in salt tolerance. This Candida albicans (strain WO-1) (Yeast) protein is 3'(2'),5'-bisphosphate nucleotidase 1 (HAL21).